The primary structure comprises 1046 residues: UDP-N-acetylglucosamine--peptide N-acetylglucosaminyltransferase 110 kDa subunit (1046 aa).

Ala-2 is modified (N-acetylalanine). Phosphoserine; by GSK3-beta; alternate occurs at positions 3 and 4. O-linked (GlcNAc) serine; alternate glycosylation is found at Ser-3 and Ser-4. A glycan (O-linked (GlcNAc) serine) is linked at Asp-10. Thr-12 carries O-linked (GlcNAc) threonine glycosylation. The O-linked (GlcNAc) serine glycan is linked to Met-18. Residue Ser-20 is modified to Phosphoserine. The TPR 1 repeat unit spans residues 21 to 54; the sequence is FQGLAELAHREYQAGDFEAAERHCMQLWRQEPDN. An O-linked (GlcNAc) threonine glycan is attached at Glu-38. Residues Pro-52 and Gly-56 are each glycosylated (O-linked (GlcNAc) serine). TPR repeat units follow at residues 89–122, 123–156, 157–190, 191–224, 225–258, 259–292, 293–326, 327–360, 361–394, 395–428, and 429–462; these read AEAY…KPDF, IDGY…NPDL, YCVR…QPNF, AVAW…DPNF, LDAY…SPNH, AVVH…QPHF, PDAY…CPTH, ADSL…FPEF, AAAH…SPTF, ADAY…NPAF, and ADAH…KPDF. An O-linked (GlcNAc) serine; by autocatalysis glycan is attached at Ser-399. The residue at position 454 (Thr-454) is a Phosphothreonine; by AMPK. A TPR 13; truncated repeat occupies 463–473; it reads PDAYCNLAHCL. The DFP motif signature appears at 464–466; it reads DAY. Positions 487–503 match the Nuclear localization signal motif; it reads KKLVSIVADQLEKNRLP. His-508 (proton acceptor) is an active-site residue. Residues Gln-849, Lys-852, 906–908, 911–914, 930–932, and Asp-935 contribute to the UDP site; these read APK, HVRR, and HTT. Residue Tyr-989 is modified to Phosphotyrosine. The required for phosphatidylinositol 3,4,5-triphosphate binding stretch occupies residues 991–1010; that stretch reads KKVRGKVWKQRISSPLFNTK.

This sequence belongs to the glycosyltransferase 41 family. O-GlcNAc transferase subfamily. In terms of assembly, monomer; may exist in different oligomerization states in cells. Homotrimer, oligomerizes via TPR repeats 6 and 7. Trimerization is not necessary for activity in vitro, however it increases affinity for UDP-GlcNAc. Component of a THAP1/THAP3-HCFC1-OGT complex. Component of the NSL complex at least composed of MOF/KAT8, KANSL1, KANSL2, KANSL3, MCRS1, PHF20, OGT1/OGT, WDR5 and HCFC1. Found in a complex with KIF5B, RHOT1, RHOT2 and TRAK1. Found in a complex composed of at least SINHCAF, SIN3A, HDAC1, SAP30, RBBP4, OGT and TET1. Component of a complex composed of KMT2E/MLL5 (isoform 3), OGT (isoform 1) and USP7; the complex stabilizes KMT2E/MLL5, preventing KMT2E/MLL5 ubiquitination and proteasomal-mediated degradation. Interacts (via TPRs 1-6) with SIN3A; the interaction mediates transcriptional repression in parallel with histone deacetylase. Interacts (via TPR 5-6) with TET1, TET2 and TET3. Interacts (via TPR repeats 6 and 7) with ATXN10. Interacts with NSD2. Interacts with PROSER1; this interaction mediates TET2 O-GlcNAcylation and stability by promoting the interaction between OGT and TET2. Interacts with USP7. As to quaternary structure, (Microbial infection) Interacts with human T-cell leukemia virus 1/HTLV-1 protein Tax; this interaction increases Tax interacting partner CREB1 O-GlcNAcylation. In terms of processing, ubiquitinated by the SCF(FBXO31) complex, leading to its proteasomal degradation. Phosphorylation on Ser-3 or Ser-4 by GSK3-beta positively regulates its activity. Phosphorylation at Thr-454 by AMPK promotes nuclear localization. Post-translationally, glycosylated via autocatalysis; O-GlcNAcylation at Ser-399 promotes nuclear localization. In terms of processing, glycosylated via autocatalysis; does not affect the enzyme activity but regulates substrate selectivity. In terms of tissue distribution, highly expressed in pancreas and to a lesser extent in skeletal muscle, heart, brain and placenta. Present in trace amounts in lung and liver.

It is found in the nucleus. Its subcellular location is the cytoplasm. It localises to the mitochondrion. The protein resides in the membrane. The protein localises to the cell membrane. It is found in the mitochondrion membrane. Its subcellular location is the cell projection. It catalyses the reaction L-seryl-[protein] + UDP-N-acetyl-alpha-D-glucosamine = 3-O-(N-acetyl-beta-D-glucosaminyl)-L-seryl-[protein] + UDP + H(+). The catalysed reaction is L-threonyl-[protein] + UDP-N-acetyl-alpha-D-glucosamine = 3-O-(N-acetyl-beta-D-glucosaminyl)-L-threonyl-[protein] + UDP + H(+). It participates in protein modification; protein glycosylation. Its activity is regulated as follows. Subject to product inhibition by UDP. Functionally, catalyzes the transfer of a single N-acetylglucosamine from UDP-GlcNAc to a serine or threonine residue in cytoplasmic and nuclear proteins resulting in their modification with a beta-linked N-acetylglucosamine (O-GlcNAc). Glycosylates a large and diverse number of proteins including histone H2B, AKT1, AMPK, ATG4B, CAPRIN1, EZH2, FNIP1, GSDMD, KRT7, LMNA, LMNB1, LMNB2, RPTOR, HOXA1, PFKL, KMT2E/MLL5, MAPT/TAU, TET2, RBL2, RET, NOD2 and HCFC1. Can regulate their cellular processes via cross-talk between glycosylation and phosphorylation or by affecting proteolytic processing. Involved in insulin resistance in muscle and adipocyte cells via glycosylating insulin signaling components and inhibiting the 'Thr-308' phosphorylation of AKT1, enhancing IRS1 phosphorylation and attenuating insulin signaling. Involved in glycolysis regulation by mediating glycosylation of 6-phosphofructokinase PFKL, inhibiting its activity. Plays a key role in chromatin structure by mediating O-GlcNAcylation of 'Ser-112' of histone H2B: recruited to CpG-rich transcription start sites of active genes via its interaction with TET proteins (TET1, TET2 or TET3). As part of the NSL complex indirectly involved in acetylation of nucleosomal histone H4 on several lysine residues. O-GlcNAcylation of 'Ser-75' of EZH2 increases its stability, and facilitating the formation of H3K27me3 by the PRC2/EED-EZH2 complex. Stabilizes KMT2E/MLL5 by mediating its glycosylation, thereby preventing KMT2E/MLL5 ubiquitination. Regulates circadian oscillation of the clock genes and glucose homeostasis in the liver. Stabilizes clock proteins BMAL1 and CLOCK through O-glycosylation, which prevents their ubiquitination and subsequent degradation. Promotes the CLOCK-BMAL1-mediated transcription of genes in the negative loop of the circadian clock such as PER1/2 and CRY1/2. O-glycosylates HCFC1 and regulates its proteolytic processing and transcriptional activity. Component of a THAP1/THAP3-HCFC1-OGT complex that is required for the regulation of the transcriptional activity of RRM1. Regulates mitochondrial motility in neurons by mediating glycosylation of TRAK1. Promotes autophagy by mediating O-glycosylation of ATG4B. Acts as a regulator of mTORC1 signaling by mediating O-glycosylation of RPTOR and FNIP1: O-GlcNAcylation of RPTOR in response to glucose sufficiency promotes activation of the mTORC1 complex. Its function is as follows. The mitochondrial isoform (mOGT) is cytotoxic and triggers apoptosis in several cell types including INS1, an insulinoma cell line. In terms of biological role, has N-acetylglucosaminyltransferase activity: glycosylates proteins, such as HNRNPU, NEUROD1, NUP62 and PDCD6IP. Displays specific substrate selectivity compared to other isoforms. This is UDP-N-acetylglucosamine--peptide N-acetylglucosaminyltransferase 110 kDa subunit from Homo sapiens (Human).